We begin with the raw amino-acid sequence, 210 residues long: Fimbriae Z protein (210 aa).

The region spanning Ser5–Leu121 is the Response regulatory domain. Position 56 is a 4-aspartylphosphate (Asp56). Residues Asn143–Glu208 enclose the HTH luxR-type domain. The H-T-H motif DNA-binding region spans Asn167–Ser186.

It is found in the cytoplasm. This is Fimbriae Z protein (fimZ) from Escherichia coli O157:H7.